The primary structure comprises 87 residues: Small ribosomal subunit protein bS20 (87 aa).

Basic residues predominate over residues 1 to 15 (MANHKSAMKRIKQTA). The tract at residues 1-27 (MANHKSAMKRIKQTAKRTERNKHERST) is disordered. Positions 16-27 (KRTERNKHERST) are enriched in basic and acidic residues.

The protein belongs to the bacterial ribosomal protein bS20 family.

Functionally, binds directly to 16S ribosomal RNA. The protein is Small ribosomal subunit protein bS20 of Citrifermentans bemidjiense (strain ATCC BAA-1014 / DSM 16622 / JCM 12645 / Bem) (Geobacter bemidjiensis).